The following is a 281-amino-acid chain: TIP41-like protein (281 aa).

This sequence belongs to the TIP41 family.

In Caenorhabditis elegans, this protein is TIP41-like protein.